Reading from the N-terminus, the 521-residue chain is Sphingolipid C9-methyltransferase 2 (521 aa).

Helical transmembrane passes span 60 to 80 (VLISILTIVPWWLSWKVGGGF) and 85 to 105 (FFAIIVDLPMLAAWWLTISAI). Residues 225-226 (YT), 262-270 (MLDIGCGWG), 288-293 (TLGRNQ), and 318-319 (YR) each bind S-adenosyl-L-methionine.

This sequence belongs to the CFA/CMAS family.

It is found in the membrane. It carries out the reaction a (4E,8E)-4-sphinga-4,8-dienine ceramide + S-adenosyl-L-methionine = a 9-methyl-(4E,8E)-sphinga-4,8-dienine ceramide + S-adenosyl-L-homocysteine + H(+). The protein operates within lipid metabolism; sphingolipid metabolism. Its function is as follows. Catalyzes methylation of the sphingoid base component of glucosylceramides (GluCers) at the C9-position. Sphingolipid C9-methylation requires 4,8-desaturated ceramides as substrates. Glucosylceramides play important roles in growth, differentiation and pathogenicity. The methyl group at the C9-position distinguishes fungal glucosylceramides from those of plants and animals and may thus play a role in host-pathogen interactions enabling the host to recognize the fungal attack and initiate specific defense responses. However, C-9 methylation of GlcCers is not essential for the sensitivity of F.graminearum to plant defensins MsDef1 and RsAFP2. This Gibberella zeae (strain ATCC MYA-4620 / CBS 123657 / FGSC 9075 / NRRL 31084 / PH-1) (Wheat head blight fungus) protein is Sphingolipid C9-methyltransferase 2.